The primary structure comprises 102 residues: Small ribosomal subunit protein uS10 (102 aa).

The tract at residues leucine 34–threonine 58 is disordered.

Belongs to the universal ribosomal protein uS10 family. Part of the 30S ribosomal subunit.

In terms of biological role, involved in the binding of tRNA to the ribosomes. The polypeptide is Small ribosomal subunit protein uS10 (Natronomonas pharaonis (strain ATCC 35678 / DSM 2160 / CIP 103997 / JCM 8858 / NBRC 14720 / NCIMB 2260 / Gabara) (Halobacterium pharaonis)).